The following is a 425-amino-acid chain: Serine--tRNA ligase (425 aa).

233 to 235 (TAE) provides a ligand contact to L-serine. An ATP-binding site is contributed by 264 to 266 (RAE). Position 287 (Glu287) interacts with L-serine. 351–354 (EISS) provides a ligand contact to ATP. Ser387 is an L-serine binding site.

The protein belongs to the class-II aminoacyl-tRNA synthetase family. Type-1 seryl-tRNA synthetase subfamily. Homodimer. The tRNA molecule binds across the dimer.

It localises to the cytoplasm. It catalyses the reaction tRNA(Ser) + L-serine + ATP = L-seryl-tRNA(Ser) + AMP + diphosphate + H(+). It carries out the reaction tRNA(Sec) + L-serine + ATP = L-seryl-tRNA(Sec) + AMP + diphosphate + H(+). It functions in the pathway aminoacyl-tRNA biosynthesis; selenocysteinyl-tRNA(Sec) biosynthesis; L-seryl-tRNA(Sec) from L-serine and tRNA(Sec): step 1/1. Catalyzes the attachment of serine to tRNA(Ser). Is also able to aminoacylate tRNA(Sec) with serine, to form the misacylated tRNA L-seryl-tRNA(Sec), which will be further converted into selenocysteinyl-tRNA(Sec). This chain is Serine--tRNA ligase, found in Clostridium botulinum (strain Alaska E43 / Type E3).